The following is a 379-amino-acid chain: uncharacterized protein (379 aa).

A helical transmembrane segment spans residues 9-26 (YFQLITTIFLISSITIAA).

To A.liquefaciens L-sorbosone dehydrogenase.

The protein resides in the membrane. This is an uncharacterized protein from Borreliella burgdorferi (strain ATCC 35210 / DSM 4680 / CIP 102532 / B31) (Borrelia burgdorferi).